The sequence spans 153 residues: MAQEGGAVEQFGQWLWSNPIEQDPDDEMVDAREEEGQILYLDQQAGLRYSYSQSTTLKPTPPGQSNSAPVYRNAQRFQTEYLSPTTVTRSQVSVLSLSHTRPQLRPALSLLNSTPRANNQPWVATLIPSQSAGPPQRSSEPKRLTGRNSRNQR.

2 disordered regions span residues 1-24 and 121-153; these read MAQE…EQDP and PWVA…RNQR. Positions 121–138 are enriched in polar residues; the sequence is PWVATLIPSQSAGPPQRS.

This sequence belongs to the luteoviruses movement protein family.

In terms of biological role, transports viral genome to neighboring plant cells directly through plasmosdesmata, without any budding. The movement protein allows efficient cell to cell propagation, by bypassing the host cell wall barrier. The protein is Movement protein of Avena byzantina (Oat).